Reading from the N-terminus, the 319-residue chain is Mas-related G-protein coupled receptor member D (319 aa).

Residues 1-30 are Extracellular-facing; sequence MNYTPYSSPAPGLTISPTMDPVTWVYFSVT. The chain crosses the membrane as a helical span at residues 31-51; it reads FLAMATCVCGIVGNSMVIWLL. At 52–64 the chain is on the cytoplasmic side; sequence SFHRVQRSPFCTY. A helical transmembrane segment spans residues 65 to 85; the sequence is VLNLAVADLLFLLCMASLLSL. Residues 86–92 are Extracellular-facing; it reads ETGPLLT. Residues 93-113 traverse the membrane as a helical segment; that stretch reads ASTSARVYEGMKRIKYFAYTA. Residues 114–144 lie on the Cytoplasmic side of the membrane; sequence GLSLLTAISTQRCLSVLFPIWYKCHRPQHLS. The chain crosses the membrane as a helical span at residues 145–165; the sequence is GVVCGVLWALALLMNFLASFF. Topologically, residues 166-184 are extracellular; the sequence is CVQFWHPDKYQCFKVDMVF. A helical membrane pass occupies residues 185 to 205; the sequence is NSLILGIFMPVMVLTSAIIFI. At 206-220 the chain is on the cytoplasmic side; it reads RMRKNSLLQRRQPRR. The helical transmembrane segment at 221–241 threads the bilayer; it reads LYVVILTSVLVFLTCSLPLGI. Over 242 to 260 the chain is Extracellular; it reads NWFLLYWVELPQAVRLLYV. The helical transmembrane segment at 261–281 threads the bilayer; it reads CSSRFSSSLSSSANPVIYFLV. Residues 282–319 lie on the Cytoplasmic side of the membrane; sequence GSQKSHRLQESLGAVLGRALQDEPEGRETPSTCTNDGV.

The protein belongs to the G-protein coupled receptor 1 family. Mas subfamily. Co-expressed in the small diameter neurons with P2X3 and VR1 in dorsal root ganglia.

It is found in the cell membrane. Functionally, may regulate nociceptor function and/or development, including the sensation or modulation of pain. Functions as a specific membrane receptor for beta-alanine. The receptor couples with G-protein G(q) and G(i). The sequence is that of Mas-related G-protein coupled receptor member D (Mrgprd) from Rattus norvegicus (Rat).